The sequence spans 292 residues: Putative ribonuclease 3 (292 aa).

An RNase III domain is found at leucine 32–aspartate 158. Residues aspartate 204–leucine 276 form the DRBM domain.

It belongs to the IIV-6 142R family.

The catalysed reaction is Endonucleolytic cleavage to 5'-phosphomonoester.. Functionally, digests double-stranded RNA. In Acheta domesticus (House cricket), this protein is Putative ribonuclease 3.